Here is a 354-residue protein sequence, read N- to C-terminus: MSSFAVRHDWSRQEVEALFALPMNDLLFRAHSIHREVFDPNEVQISRLLSIKTGACPEDCKYCPQSARYDTGLEKERLLEIEKVLTEARAAKDAGATRFCMGAAWRNPHERDMPYLTDMVKEVKSMGLETCMTLGMLSAHQANQLAEAGLDYYNHNLDTSPEFYGDIITTRTYQDRLDTLSNVRAAGMKVCSGGIVGMGEQATDRAGLLQQLANLEQHPDSVPINMLVKVTGTPLDSVDDLDPLEFVRTIAVARILMPLSRVRLSAGRENMSDELQAMCFFAGANSIFYGCKLLTTPNPEENDDMSLFRRLGLKPEQGKAAIVEEDAAVVARAAREQQAEGEAKTKPLFYDAAN.

One can recognise a Radical SAM core domain in the interval 41-268; it reads NEVQISRLLS…LSRVRLSAGR (228 aa). Residues cysteine 56, cysteine 60, and cysteine 63 each coordinate [4Fe-4S] cluster. Residues cysteine 100, cysteine 131, cysteine 191, and arginine 263 each contribute to the [2Fe-2S] cluster site.

It belongs to the radical SAM superfamily. Biotin synthase family. In terms of assembly, homodimer. [4Fe-4S] cluster serves as cofactor. It depends on [2Fe-2S] cluster as a cofactor.

The enzyme catalyses (4R,5S)-dethiobiotin + (sulfur carrier)-SH + 2 reduced [2Fe-2S]-[ferredoxin] + 2 S-adenosyl-L-methionine = (sulfur carrier)-H + biotin + 2 5'-deoxyadenosine + 2 L-methionine + 2 oxidized [2Fe-2S]-[ferredoxin]. It participates in cofactor biosynthesis; biotin biosynthesis; biotin from 7,8-diaminononanoate: step 2/2. In terms of biological role, catalyzes the conversion of dethiobiotin (DTB) to biotin by the insertion of a sulfur atom into dethiobiotin via a radical-based mechanism. This chain is Biotin synthase, found in Shewanella amazonensis (strain ATCC BAA-1098 / SB2B).